The chain runs to 220 residues: N-(5'-phosphoribosyl)anthranilate isomerase (220 aa).

The protein belongs to the TrpF family.

The enzyme catalyses N-(5-phospho-beta-D-ribosyl)anthranilate = 1-(2-carboxyphenylamino)-1-deoxy-D-ribulose 5-phosphate. Its pathway is amino-acid biosynthesis; L-tryptophan biosynthesis; L-tryptophan from chorismate: step 3/5. This chain is N-(5'-phosphoribosyl)anthranilate isomerase, found in Xylella fastidiosa (strain M12).